Here is a 942-residue protein sequence, read N- to C-terminus: Leucine--tRNA ligase (942 aa).

The 'HIGH' region motif lies at 41–51; sequence PYLNGVLHAGH. Positions 633-637 match the 'KMSKS' region motif; that stretch reads KLSKS. Lysine 636 provides a ligand contact to ATP.

It belongs to the class-I aminoacyl-tRNA synthetase family.

The protein localises to the cytoplasm. The enzyme catalyses tRNA(Leu) + L-leucine + ATP = L-leucyl-tRNA(Leu) + AMP + diphosphate. The sequence is that of Leucine--tRNA ligase from Methanocaldococcus jannaschii (strain ATCC 43067 / DSM 2661 / JAL-1 / JCM 10045 / NBRC 100440) (Methanococcus jannaschii).